Reading from the N-terminus, the 398-residue chain is MENETGSELNQTQLQPRAVVALEYQVVTILLVLIICGLGIVGNIMVVLVVMRTKHMRTPTNCYLVSLAVADLMVLVAAGLPNITDSIYGSWVYGYVGCLCITYLQYLGINASSCSITAFTIERYIAICHPIKAQFLCTFSRAKKIIIFVWAFTSIYCMLWFFLLDLNISTYKDAIVVSCGYKISRNYYSPIYLMDFGVFYVVPMILATVLYGFIARILFLSPIPSDPKENSNTWKNDSTHQNKNLNSKTSNRYFNSTVSSRKQVTKMLAVVVILFALLWMPYRTLVVVNSFLSSPFQENWFLLFCRICIYLNSAINPVIYNLMSQKFRAAFRKLCNCKQKPVEKPANYSVALNYSVIKESDHFSTELDDITVTDTYLSATKVSFDDTCLASEVTFSQS.

Over 1–28 the chain is Extracellular; that stretch reads MENETGSELNQTQLQPRAVVALEYQVVT. 2 N-linked (GlcNAc...) asparagine glycosylation sites follow: Asn-3 and Asn-10. A helical membrane pass occupies residues 29 to 51; the sequence is ILLVLIICGLGIVGNIMVVLVVM. Residues 52–61 are Cytoplasmic-facing; that stretch reads RTKHMRTPTN. Residues 62–83 form a helical membrane-spanning segment; sequence CYLVSLAVADLMVLVAAGLPNI. Residues 84–99 are Extracellular-facing; the sequence is TDSIYGSWVYGYVGCL. A disulfide bond links Cys-98 and Cys-179. Residues 100 to 121 form a helical membrane-spanning segment; it reads CITYLQYLGINASSCSITAFTI. Residues 122 to 144 lie on the Cytoplasmic side of the membrane; sequence ERYIAICHPIKAQFLCTFSRAKK. Residues 145–168 form a helical membrane-spanning segment; the sequence is IIIFVWAFTSIYCMLWFFLLDLNI. Over 169-193 the chain is Extracellular; it reads STYKDAIVVSCGYKISRNYYSPIYL. The chain crosses the membrane as a helical span at residues 194–215; sequence MDFGVFYVVPMILATVLYGFIA. Residues 216 to 266 are Cytoplasmic-facing; sequence RILFLSPIPSDPKENSNTWKNDSTHQNKNLNSKTSNRYFNSTVSSRKQVTK. The helical transmembrane segment at 267–288 threads the bilayer; it reads MLAVVVILFALLWMPYRTLVVV. Residues 289–296 are Extracellular-facing; sequence NSFLSSPF. The helical transmembrane segment at 297 to 319 threads the bilayer; it reads QENWFLLFCRICIYLNSAINPVI. At 320–398 the chain is on the cytoplasmic side; the sequence is YNLMSQKFRA…LASEVTFSQS (79 aa).

The protein belongs to the G-protein coupled receptor 1 family.

The protein localises to the cell membrane. Its function is as follows. Receptor for thyrotropin-releasing hormone (TRH). Upon ligand binding, this G-protein-coupled receptor triggers activation of the phosphatidylinositol (IP3)-calcium-protein kinase C (PKC) pathway. In Ovis aries (Sheep), this protein is Thyrotropin-releasing hormone receptor (TRHR).